The primary structure comprises 302 residues: MAEASSFLAQKRYAVVTGANKGLGLEICGQLASQGVTVLLTSRDEKRGLEAIEELKKSGINSENLEYHQLDVTKPASFASLADFIKAKFGKLDILVNNAGISGVIVDYAALMEAIRRRGAEINYDGVMKQTYELAEECLQTNYYGVKRTINALLPLLQFSDSPRIVNVSSDVGLLKKIPGERIREALGDVEKLTEESVDGILDEFLRDFKEGKIAEKGWPTFKSAYSISKAALNSYTRVLARKYPSIIINCVCPGVVKTDINLKMGHLTVEEGAASPVRLALMPLGSPSGLFYTRNEVTPFE.

Residues 20–23, arginine 43, 71–72, and asparagine 98 each bind NADP(+); these read NKGL and DV. Serine 170 lines the substrate pocket. NADP(+) is bound by residues tyrosine 226, lysine 230, and 257–262; that span reads VKTDIN. The active-site Proton acceptor is the tyrosine 226.

The protein belongs to the short-chain dehydrogenases/reductases (SDR) family. In terms of tissue distribution, mainly expressed in flowers and flower buds, to a lesser extent in leaves and, at low levels, in stems and roots.

It functions in the pathway secondary metabolite biosynthesis; terpenoid biosynthesis. Functionally, component of the oleanane-type triterpene saponins (e.g. saponarioside A and saponarioside B) biosynthetic pathway, leading to the production of natural products with detergent properties used as traditional sources of soap. A dehydrogenase/reductase that, together with UGT74CD1, mediates the conversion of QA-tri to QA-triF; UGT74CD1 may transfer 4-keto-6-deoxy-glucose to QA-tri, which is in turn reduced to D-fucose by SDR1, thus leading to QA-triF formation via the initiation of the C-28 sugar chain. This is Short-chain dehydrogenase/reductase 1 from Saponaria officinalis (Common soapwort).